Consider the following 356-residue polypeptide: Probable cinnamyl alcohol dehydrogenase (356 aa).

C47 contacts Zn(2+). NADP(+) is bound at residue S49. H69, E70, C100, C103, C106, C114, and C163 together coordinate Zn(2+). NADP(+) contacts are provided by residues T167, 188–193 (GLGGVG), 211–216 (SSSDKK), T251, G275, and 298–300 (SFI).

The protein belongs to the zinc-containing alcohol dehydrogenase family. In terms of assembly, homodimer. Requires Zn(2+) as cofactor.

The catalysed reaction is (E)-cinnamyl alcohol + NADP(+) = (E)-cinnamaldehyde + NADPH + H(+). It carries out the reaction (E)-coniferol + NADP(+) = (E)-coniferaldehyde + NADPH + H(+). The enzyme catalyses (E)-sinapyl alcohol + NADP(+) = (E)-sinapaldehyde + NADPH + H(+). It catalyses the reaction (E)-4-coumaroyl alcohol + NADP(+) = (E)-4-coumaraldehyde + NADPH + H(+). The catalysed reaction is (E)-caffeyl alcohol + NADP(+) = (E)-caffeyl aldehyde + NADPH + H(+). The protein operates within aromatic compound metabolism; phenylpropanoid biosynthesis. Its function is as follows. Involved in lignin biosynthesis. Catalyzes the final step specific for the production of lignin monomers. Catalyzes the NADPH-dependent reduction of coniferaldehyde, 5-hydroxyconiferaldehyde, sinapaldehyde, 4-coumaraldehyde and caffeyl aldehyde to their respective alcohols. The chain is Probable cinnamyl alcohol dehydrogenase (CAD) from Eucalyptus globulus (Tasmanian blue gum).